The chain runs to 488 residues: Peptidoglycan endopeptidase LytF (488 aa).

The first 26 residues, 1-26 (MKKKLAAGLTASAIVGTTLVVTPAEA), serve as a signal peptide directing secretion. 2 consecutive LysM domains span residues 27 to 70 (ATIK…TLTI) and 92 to 135 (SVYT…KLKV). 3 disordered regions span residues 70 to 93 (IPGS…GSSV), 137 to 176 (GTVS…TGTY), and 218 to 239 (KSSG…TSAT). 2 stretches are compositionally biased toward low complexity: residues 72-93 (GSKS…GSSV) and 140-172 (SSSS…SSSS). The 44-residue stretch at 174–217 (GTYKVQLGDSLWKIANKVNMSIAELKVLNNLKSDTIYVNQVLKT) folds into the LysM 3 domain. Residues 240–283 (TKYTVKSGDSLWKIANNYNLTVQQIRNINNLKSDVLYVGQVLKL) form the LysM 4 domain. Residues 286 to 306 (KASSGSSSSSSSSSNASSGTT) form a disordered region. The 44-residue stretch at 307–350 (TTYTVKSGDSLWVIAQKFNVTAQQIREKNNLKTDVLQVGQKLVI) folds into the LysM 5 domain. The 119-residue stretch at 370–488 (SAKINTMISA…QRYLGAKRYF (119 aa)) folds into the NlpC/P60 domain. The active-site Nucleophile is the C400. The active-site Proton acceptor is H449. Residue N461 is part of the active site.

The protein belongs to the peptidase C40 family.

The protein localises to the secreted. The protein resides in the cell wall. Is inhibited in vitro by para-hydroxymercuribenzoate, a sulfydryl inhibitor. Cell wall hydrolase that cleaves gamma-D-glutamate-meso-diaminopimelate bonds in peptidoglycan. LytF is necessary and sufficient for vegetative daughter cell separation, and also seems to play a role in cell autolysis. This is Peptidoglycan endopeptidase LytF (lytF) from Bacillus subtilis (strain 168).